Here is a 410-residue protein sequence, read N- to C-terminus: Platelet-activating factor acetylhydrolase IB subunit alpha (410 aa).

The tract at residues 1-38 (MVLSQRQRDELNRAIADYLRSNGYEEAYSVFKKEAELD) is required for self-association and interaction with PAFAH1B2 and PAFAH1B3. The interval 1 to 66 (MVLSQRQRDE…SVIRLQKKVM (66 aa)) is interaction with NDE1. The interval 1 to 102 (MVLSQRQRDE…EWIPRPPEKY (102 aa)) is interaction with NDEL1. In terms of domain architecture, LisH spans 7-39 (QRDELNRAIADYLRSNGYEEAYSVFKKEAELDM). An N6-acetyllysine modification is found at Lys53. A coiled-coil region spans residues 56-82 (TSVIRLQKKVMELESKLNEAKEEFTSG). The segment at 83 to 410 (GPLGQKRDPK…DQTVKVWECR (328 aa)) is interaction with dynein and dynactin. 7 WD repeats span residues 106-147 (GHRS…RTLK), 148-187 (GHTD…CIRT), 190-229 (GHDH…CVKT), 232-271 (GHRE…CKAE), 274-333 (EHEH…CLMT), 336-377 (GHDN…KTLN), and 378-410 (AHEH…WECR). Ser109 is modified (phosphoserine). The tract at residues 367-409 (YKNKRCMKTLNAHEHFVTSLDFHKTAPYVVTGSVDQTVKVWEC) is interaction with DCX. An interaction with NDEL1 region spans residues 388 to 410 (FHKTAPYVVTGSVDQTVKVWECR).

The protein belongs to the WD repeat LIS1/nudF family. As to quaternary structure, can self-associate. Component of the cytosolic PAF-AH (I) heterotetrameric enzyme, which is composed of PAFAH1B1 (beta), PAFAH1B2 (alpha2) and PAFAH1B3 (alpha1) subunits. The catalytic activity of the enzyme resides in the alpha1 (PAFAH1B3) and alpha2 (PAFAH1B2) subunits, whereas the beta subunit (PAFAH1B1) has regulatory activity. Trimer formation is not essential for the catalytic activity. Interacts with the catalytic dimer of PAF-AH (I) heterotetrameric enzyme: interacts with PAFAH1B2 homodimer (alpha2/alpha2 homodimer), PAFAH1B3 homodimer (alpha1/alpha1 homodimer) and PAFAH1B2-PAFAH1B3 heterodimer (alpha2/alpha1 heterodimer). Interacts with DCX, dynein, dynactin, IQGAP1, KATNB1, NDE1, NDEL1, NUDC and RSN. Interacts with DISC1, and this interaction is enhanced by NDEL1. Interacts with DAB1 when DAB1 is phosphorylated in response to RELN/reelin signaling. Interacts with INTS13. Interacts with DCDC1.

The protein localises to the cytoplasm. Its subcellular location is the cytoskeleton. It localises to the microtubule organizing center. It is found in the centrosome. The protein resides in the spindle. The protein localises to the nucleus membrane. Its function is as follows. Regulatory subunit (beta subunit) of the cytosolic type I platelet-activating factor (PAF) acetylhydrolase (PAF-AH (I)), an enzyme that catalyzes the hydrolyze of the acetyl group at the sn-2 position of PAF and its analogs and participates in PAF inactivation. Regulates the PAF-AH (I) activity in a catalytic dimer composition-dependent manner. Positively regulates the activity of the minus-end directed microtubule motor protein dynein. May enhance dynein-mediated microtubule sliding by targeting dynein to the microtubule plus end. Required for several dynein- and microtubule-dependent processes such as the maintenance of Golgi integrity, the peripheral transport of microtubule fragments and the coupling of the nucleus and centrosome. Required during brain development for the proliferation of neuronal precursors and the migration of newly formed neurons from the ventricular/subventricular zone toward the cortical plate. Neuronal migration involves a process called nucleokinesis, whereby migrating cells extend an anterior process into which the nucleus subsequently translocates. During nucleokinesis dynein at the nuclear surface may translocate the nucleus towards the centrosome by exerting force on centrosomal microtubules. Also required for proper activation of Rho GTPases and actin polymerization at the leading edge of locomoting cerebellar neurons and postmigratory hippocampal neurons in response to calcium influx triggered via NMDA receptors. May also play a role in other forms of cell locomotion including the migration of fibroblasts during wound healing. Required for dynein recruitment to microtubule plus ends and BICD2-bound cargos. May modulate the Reelin pathway through interaction of the PAF-AH (I) catalytic dimer with VLDLR. The polypeptide is Platelet-activating factor acetylhydrolase IB subunit alpha (Sus scrofa (Pig)).